We begin with the raw amino-acid sequence, 453 residues long: Bifunctional protein GlmU (453 aa).

A pyrophosphorylase region spans residues 1–231; it reads MERSSLAVIL…EKELTGCNNR (231 aa). UDP-N-acetyl-alpha-D-glucosamine-binding positions include 10–13, K24, Q77, 82–83, 105–107, G143, E157, N172, and N229; these read LAAG, GT, and YGD. Residue D107 participates in Mg(2+) binding. Residue N229 coordinates Mg(2+). The segment at 232 to 252 is linker; the sequence is AELAFIERLWQERRRHELMVD. Positions 253 to 453 are N-acetyltransferase; the sequence is GVSMIAPETV…AQKEAKKKSS (201 aa). UDP-N-acetyl-alpha-D-glucosamine-binding residues include R318 and K336. Residue H348 is the Proton acceptor of the active site. Y351 and N362 together coordinate UDP-N-acetyl-alpha-D-glucosamine. Acetyl-CoA-binding positions include A365, 371–372, S390, S408, and R425; that span reads NY.

In the N-terminal section; belongs to the N-acetylglucosamine-1-phosphate uridyltransferase family. The protein in the C-terminal section; belongs to the transferase hexapeptide repeat family. In terms of assembly, homotrimer. It depends on Mg(2+) as a cofactor.

The protein localises to the cytoplasm. The enzyme catalyses alpha-D-glucosamine 1-phosphate + acetyl-CoA = N-acetyl-alpha-D-glucosamine 1-phosphate + CoA + H(+). It catalyses the reaction N-acetyl-alpha-D-glucosamine 1-phosphate + UTP + H(+) = UDP-N-acetyl-alpha-D-glucosamine + diphosphate. Its pathway is nucleotide-sugar biosynthesis; UDP-N-acetyl-alpha-D-glucosamine biosynthesis; N-acetyl-alpha-D-glucosamine 1-phosphate from alpha-D-glucosamine 6-phosphate (route II): step 2/2. It functions in the pathway nucleotide-sugar biosynthesis; UDP-N-acetyl-alpha-D-glucosamine biosynthesis; UDP-N-acetyl-alpha-D-glucosamine from N-acetyl-alpha-D-glucosamine 1-phosphate: step 1/1. It participates in bacterial outer membrane biogenesis; LPS lipid A biosynthesis. Catalyzes the last two sequential reactions in the de novo biosynthetic pathway for UDP-N-acetylglucosamine (UDP-GlcNAc). The C-terminal domain catalyzes the transfer of acetyl group from acetyl coenzyme A to glucosamine-1-phosphate (GlcN-1-P) to produce N-acetylglucosamine-1-phosphate (GlcNAc-1-P), which is converted into UDP-GlcNAc by the transfer of uridine 5-monophosphate (from uridine 5-triphosphate), a reaction catalyzed by the N-terminal domain. The polypeptide is Bifunctional protein GlmU (Agrobacterium fabrum (strain C58 / ATCC 33970) (Agrobacterium tumefaciens (strain C58))).